A 479-amino-acid chain; its full sequence is Trigger factor (479 aa).

The PPIase FKBP-type domain occupies glycine 174–proline 261. The interval lysine 437 to serine 479 is disordered. Basic residues predominate over residues lysine 453–lysine 466. Basic and acidic residues predominate over residues alanine 467 to serine 479.

It belongs to the FKBP-type PPIase family. Tig subfamily.

It is found in the cytoplasm. It carries out the reaction [protein]-peptidylproline (omega=180) = [protein]-peptidylproline (omega=0). In terms of biological role, involved in protein export. Acts as a chaperone by maintaining the newly synthesized protein in an open conformation. Functions as a peptidyl-prolyl cis-trans isomerase. The protein is Trigger factor of Prochlorococcus marinus (strain MIT 9303).